The following is a 226-amino-acid chain: MARLFRASCLLSLLLAGFIPPSQGQEKSKTDCHAGVGGTIYEYGALTIDGEEYIPFKQYAGKYILFVNVASYUGLTGQYVELNALQEELEPFGLVILGFPCNQFGKQEPGENSEILATLKYVRPGGGFTPNFQLFEKGDVNGEKEQKFYTFLKNSCPPTSELLGSPDRLFWEPMKVHDIRWNFEKFLVGPDGIPIMRWYHRTTVNSVKMDILTYMRRRAVWEAKGK.

A signal peptide spans 1-24; that stretch reads MARLFRASCLLSLLLAGFIPPSQG. The active site involves U73. U73 is a non-standard amino acid (selenocysteine).

This sequence belongs to the glutathione peroxidase family. Homotetramer. In terms of tissue distribution, secreted in plasma.

The protein resides in the secreted. The catalysed reaction is 2 glutathione + H2O2 = glutathione disulfide + 2 H2O. It catalyses the reaction tert-butyl hydroperoxide + 2 glutathione = tert-butanol + glutathione disulfide + H2O. Functionally, protects cells and enzymes from oxidative damage, by catalyzing the reduction of hydrogen peroxide, lipid peroxides and organic hydroperoxide, by glutathione. In Bos taurus (Bovine), this protein is Glutathione peroxidase 3.